A 185-amino-acid polypeptide reads, in one-letter code: Elongation factor P (185 aa).

It belongs to the elongation factor P family.

It localises to the cytoplasm. The protein operates within protein biosynthesis; polypeptide chain elongation. Functionally, involved in peptide bond synthesis. Stimulates efficient translation and peptide-bond synthesis on native or reconstituted 70S ribosomes in vitro. Probably functions indirectly by altering the affinity of the ribosome for aminoacyl-tRNA, thus increasing their reactivity as acceptors for peptidyl transferase. This Petrotoga mobilis (strain DSM 10674 / SJ95) protein is Elongation factor P.